The primary structure comprises 414 residues: Acyltransferase MYCGRDRAFT_85486 (414 aa).

Residues 16 to 25 (DGTSTVTIRP) show a composition bias toward polar residues. The segment at 16–47 (DGTSTVTIRPTQKAAPSEEPSQDTAPSKKDSN) is disordered. H329 contacts substrate. E367 serves as the catalytic Proton acceptor.

It belongs to the lysine N-acyltransferase mbtK family.

It functions in the pathway siderophore biosynthesis. Its function is as follows. Acyltransferase; part of the gene cluster 14 that mediates the biosynthesis of a ferrichrome A-like siderophore which may contribute to organismal virulence. The first step of siderophore biosynthesis is performed by the HMG-CoA synthase (HMGS) MYCGRDRAFT_54740 which catalyzes the generation of HMG-CoA and CoA using acetoacetyl-CoA and acetyl-CoA as substrates. The enoyl-CoA isomerase/hydratase MYCGRDRAFT_76805 then catalyzes the conversion of HMG-CoA to methylglutaconyl-CoA. The acyltransferase MYCGRDRAFT_85486 then fuses methylglutaconyl-CoA with hydroxyornithine to yield methylglutaconyl hydroxyornithine. Methylglutaconyl hydroxyornithine is then available for use by the nonribosomal peptide synthetase NRPS2 to generate the ferrichrome A-like siderophore. The chain is Acyltransferase MYCGRDRAFT_85486 from Zymoseptoria tritici (strain CBS 115943 / IPO323) (Speckled leaf blotch fungus).